The sequence spans 280 residues: Octanoyl-[GcvH]:protein N-octanoyltransferase (280 aa).

Residues 40–245 (QERGAVLRAW…VLSTVSLLQN (206 aa)) form the BPL/LPL catalytic domain. The active-site Acyl-thioester intermediate is Cys-144.

The protein belongs to the octanoyltransferase LipL family.

It catalyses the reaction N(6)-octanoyl-L-lysyl-[glycine-cleavage complex H protein] + L-lysyl-[lipoyl-carrier protein] = N(6)-octanoyl-L-lysyl-[lipoyl-carrier protein] + L-lysyl-[glycine-cleavage complex H protein]. It participates in protein modification; protein lipoylation via endogenous pathway; protein N(6)-(lipoyl)lysine from octanoyl-[acyl-carrier-protein]. Catalyzes the amidotransfer (transamidation) of the octanoyl moiety from octanoyl-GcvH to the lipoyl domain of the E2 subunit of lipoate-dependent enzymes. In Exiguobacterium sp. (strain ATCC BAA-1283 / AT1b), this protein is Octanoyl-[GcvH]:protein N-octanoyltransferase.